The sequence spans 20 residues: Agglutinin beta-3 chain (20 aa).

Residues G1–N20 are disordered.

This sequence belongs to the jacalin lectin family. As to quaternary structure, formed of four alpha chains and four beta chains.

Functionally, D-galactose-specific lectin, binds the T-antigen structure Gal-beta1,3-GalNAc. The protein is Agglutinin beta-3 chain of Maclura pomifera (Osage orange).